Consider the following 381-residue polypeptide: MVVMSRVSFYSSFLLLLLEVVVASSEFDDEGRTSFSPTTAIIMIVLVSVFFALGCISVYMRRCLQHALGMDSGGGPGNWLNVRQTTEPGLDASVIETFPTFPYSTVKTLRIGKEALECPVCLNEFEDDETLRLIPQCCHVFHPGCIDAWLRSQTTCPLCRANLVPVPGESVSSEIPGLARETGQNSLRTPIDDNRKRVLTSPDERLIDSVAWTGNQSMPRKSMSTGWKLAELYSPASSPGQPEENLDRYTLRLPQEIHDQLVNSSLGKQGSKGQLALPQERSSVRGFRTGSLGTEKNYFYFERFDQDGRLDRRPFSITPPYHTRSIQSPDEIINASGNYQDRAGAPKGLLLAIRSPFDRLFTGKKNAGERSYLQSGDASPV.

Residues 1 to 23 (MVVMSRVSFYSSFLLLLLEVVVA) form the signal peptide. A helical membrane pass occupies residues 40-60 (AIIMIVLVSVFFALGCISVYM). The RING-type; atypical zinc finger occupies 118 to 160 (CPVCLNEFEDDETLRLIPQCCHVFHPGCIDAWLRSQTTCPLCR).

It belongs to the RING-type zinc finger family. ATL subfamily.

Its subcellular location is the membrane. The catalysed reaction is S-ubiquitinyl-[E2 ubiquitin-conjugating enzyme]-L-cysteine + [acceptor protein]-L-lysine = [E2 ubiquitin-conjugating enzyme]-L-cysteine + N(6)-ubiquitinyl-[acceptor protein]-L-lysine.. The protein operates within protein modification; protein ubiquitination. E3 ubiquitin-protein ligase able to catalyze polyubiquitination with ubiquitin-conjugating enzyme E2 UBC8, UBC10, UBC11, UBC28 and UBC29 in vitro. This Arabidopsis thaliana (Mouse-ear cress) protein is E3 ubiquitin-protein ligase ATL15 (ATL15).